The primary structure comprises 326 residues: Holliday junction branch migration complex subunit RuvB (326 aa).

The tract at residues 1–180 (MRSISCSKEY…FGIPLRLEFY (180 aa)) is large ATPase domain (RuvB-L). ATP is bound by residues I19, R20, G61, K64, T65, T66, 127–129 (EDF), R170, Y180, and R217. T65 is a binding site for Mg(2+). Positions 181–251 (SFEELVDIIK…IADSALSKLG (71 aa)) are small ATPAse domain (RuvB-S). The interval 254 to 326 (KMGLNKLDVD…QGKEYLSLQY (73 aa)) is head domain (RuvB-H). DNA contacts are provided by R307 and R312.

This sequence belongs to the RuvB family. In terms of assembly, homohexamer. Forms an RuvA(8)-RuvB(12)-Holliday junction (HJ) complex. HJ DNA is sandwiched between 2 RuvA tetramers; dsDNA enters through RuvA and exits via RuvB. An RuvB hexamer assembles on each DNA strand where it exits the tetramer. Each RuvB hexamer is contacted by two RuvA subunits (via domain III) on 2 adjacent RuvB subunits; this complex drives branch migration. In the full resolvosome a probable DNA-RuvA(4)-RuvB(12)-RuvC(2) complex forms which resolves the HJ.

Its subcellular location is the cytoplasm. It catalyses the reaction ATP + H2O = ADP + phosphate + H(+). Its function is as follows. The RuvA-RuvB-RuvC complex processes Holliday junction (HJ) DNA during genetic recombination and DNA repair, while the RuvA-RuvB complex plays an important role in the rescue of blocked DNA replication forks via replication fork reversal (RFR). RuvA specifically binds to HJ cruciform DNA, conferring on it an open structure. The RuvB hexamer acts as an ATP-dependent pump, pulling dsDNA into and through the RuvAB complex. RuvB forms 2 homohexamers on either side of HJ DNA bound by 1 or 2 RuvA tetramers; 4 subunits per hexamer contact DNA at a time. Coordinated motions by a converter formed by DNA-disengaged RuvB subunits stimulates ATP hydrolysis and nucleotide exchange. Immobilization of the converter enables RuvB to convert the ATP-contained energy into a lever motion, pulling 2 nucleotides of DNA out of the RuvA tetramer per ATP hydrolyzed, thus driving DNA branch migration. The RuvB motors rotate together with the DNA substrate, which together with the progressing nucleotide cycle form the mechanistic basis for DNA recombination by continuous HJ branch migration. Branch migration allows RuvC to scan DNA until it finds its consensus sequence, where it cleaves and resolves cruciform DNA. This Wolbachia sp. subsp. Brugia malayi (strain TRS) protein is Holliday junction branch migration complex subunit RuvB.